The chain runs to 253 residues: 3-isopropylmalate dehydratase small subunit 3 (253 aa).

The N-terminal 56 residues, 1–56, are a transit peptide targeting the chloroplast; the sequence is MATSQQFLNPTLFKSLASSNKNSCTLCPSPFLQLKSASTIFNYKPLTSSSATIITR.

This sequence belongs to the LeuD family. Heterodimer of the large LEUC/IIL1 subunit and the small LEUD (SSU1, SSU2 or SSU3) subunits. Expressed in vascular bundles of roots, cotyledons and rosette leaves. Expressed in stem vascular bundles which branche off into lateral inflorescences. Expressed in connective tissues in anthers. In hypocotyls, expressed in parenchyma cells surrounding the vasculature. In rosette leaves, expressed in phloem cells and cells close to the xylem along the vascular bundles. In roots of adult plants, expressed in cells closely associated with the stele. In flowering stalks, expressed in parenchyma cells associated with the phloem or the xylem.

The protein resides in the plastid. The protein localises to the chloroplast stroma. It carries out the reaction (2R,3S)-3-isopropylmalate = (2S)-2-isopropylmalate. It catalyses the reaction a 2-(omega-methylsulfanyl)alkylmalate = a 2-(omega-methylsulfanyl)alkylmaleate + H2O. The enzyme catalyses 2-(3-methylsulfanyl)propylmalate = 2-(2-methylsulfanyl)propylmaleate + H2O. The catalysed reaction is a 3-(omega-methylsulfanyl)alkylmalate = a 2-(omega-methylsulfanyl)alkylmaleate + H2O. It carries out the reaction 2-(2-methylsulfanyl)ethylmalate = 2-(2-methylsulfanyl)ethylmaleate + H2O. It catalyses the reaction 3-(2-methylsulfanyl)ethylmalate = 2-(2-methylsulfanyl)ethylmaleate + H2O. The enzyme catalyses 3-(3-methylsulfanyl)propylmalate = 2-(2-methylsulfanyl)propylmaleate + H2O. The protein operates within amino-acid biosynthesis; L-leucine biosynthesis; L-leucine from 3-methyl-2-oxobutanoate: step 2/4. Functionally, catalyzes the isomerization between 2-isopropylmalate and 3-isopropylmalate, via the formation of 2-isopropylmaleate. Functions redundantly with LEUD1 in the methionine chain elongation pathway of aliphatic glucosinolate formation. The protein is 3-isopropylmalate dehydratase small subunit 3 of Arabidopsis thaliana (Mouse-ear cress).